The sequence spans 137 residues: Nucleoside diphosphate kinase (137 aa).

Positions 9, 57, 85, 91, 102, and 112 each coordinate ATP. Histidine 115 functions as the Pros-phosphohistidine intermediate in the catalytic mechanism.

It belongs to the NDK family. In terms of assembly, homotetramer. The cofactor is Mg(2+).

It is found in the cytoplasm. The catalysed reaction is a 2'-deoxyribonucleoside 5'-diphosphate + ATP = a 2'-deoxyribonucleoside 5'-triphosphate + ADP. The enzyme catalyses a ribonucleoside 5'-diphosphate + ATP = a ribonucleoside 5'-triphosphate + ADP. Major role in the synthesis of nucleoside triphosphates other than ATP. The ATP gamma phosphate is transferred to the NDP beta phosphate via a ping-pong mechanism, using a phosphorylated active-site intermediate. The polypeptide is Nucleoside diphosphate kinase (Sulfurimonas denitrificans (strain ATCC 33889 / DSM 1251) (Thiomicrospira denitrificans (strain ATCC 33889 / DSM 1251))).